We begin with the raw amino-acid sequence, 397 residues long: F-box protein At4g11590 (397 aa).

In terms of domain architecture, F-box spans 24 to 70 (EKNFNDVPLDVAIEIFMRLPVKSVARFLLLSKFWAEIIRSRHFITSF).

As to quaternary structure, part of a SCF (ASK-cullin-F-box) protein ligase complex. Interacts with ASK16.

The protein localises to the nucleus. Its pathway is protein modification; protein ubiquitination. Functionally, component of SCF(ASK-cullin-F-box) E3 ubiquitin ligase complexes, which may mediate the ubiquitination and subsequent proteasomal degradation of target proteins. The sequence is that of F-box protein At4g11590 from Arabidopsis thaliana (Mouse-ear cress).